Reading from the N-terminus, the 206-residue chain is Thymidylate kinase (206 aa).

11-18 (GIDGAGKT) contributes to the ATP binding site.

It belongs to the thymidylate kinase family.

The enzyme catalyses dTMP + ATP = dTDP + ADP. Functionally, phosphorylation of dTMP to form dTDP in both de novo and salvage pathways of dTTP synthesis. The chain is Thymidylate kinase from Burkholderia lata (strain ATCC 17760 / DSM 23089 / LMG 22485 / NCIMB 9086 / R18194 / 383).